A 166-amino-acid chain; its full sequence is Transmembrane protein 190 (166 aa).

The N-terminal stretch at 1-21 (MVGSGISALGLLLLMQGSVDA) is a signal peptide. At 22–81 (NGIQGFFYPWSCEGDVWDRESCGGQAAIENPNLCLRLRCCYRDGVCYHQRPDENMRRKHM) the chain is on the extracellular side. One can recognise a P-type domain in the interval 31–71 (WSCEGDVWDRESCGGQAAIENPNLCLRLRCCYRDGVCYHQR). Intrachain disulfides connect C33–C61, C43–C60, and C55–C67. A helical membrane pass occupies residues 82 to 102 (WALGWTCGSLLFLITSICLFW). Residues 103 to 166 (WARRQDMLHL…VSGEDTGGEE (64 aa)) lie on the Cytoplasmic side of the membrane. The segment at 130–166 (LSKDRRSANKSTTVLQSPGGEVETAAAVSGEDTGGEE) is disordered.

In terms of tissue distribution, detected in testis and in a mixture of spermatogenic cells at various stages (testicular germ cells). Not detected in heart, brain, spleen, lung, liver, skeletal muscle and kidney.

The protein localises to the membrane. The polypeptide is Transmembrane protein 190 (Tmem190) (Mus musculus (Mouse)).